The following is a 186-amino-acid chain: Photosystem I assembly protein Ycf4 (186 aa).

The next 2 membrane-spanning stretches (helical) occupy residues 22–42 and 57–77; these read FCWA…GTSS and IIFF…LFIS.

The protein belongs to the Ycf4 family.

It is found in the plastid. The protein localises to the chloroplast thylakoid membrane. Its function is as follows. Seems to be required for the assembly of the photosystem I complex. The chain is Photosystem I assembly protein Ycf4 from Dioscorea elephantipes (Elephant's foot yam).